The sequence spans 172 residues: Scytalone dehydratase-like protein Arp1 (172 aa).

Tyr-49 provides a ligand contact to substrate. Active-site residues include His-84 and His-109. Asn-130 is a substrate binding site.

The protein belongs to the scytalone dehydratase family. In terms of assembly, homotrimer. Each subunit contains an active site, located in the central part of the hydrophobic core of the monomer, which functions independently.

Scytalone dehydratase-like protein; part of the Pks2 gene cluster that mediates the formation of infectious structures (appressoria), enabling these fungi to kill insects faster. The product of the Pks2 gene cluster is different from the one of Pks1 and has still not been identified. The polypeptide is Scytalone dehydratase-like protein Arp1 (Metarhizium guizhouense (strain ARSEF 977)).